We begin with the raw amino-acid sequence, 204 residues long: Tetraspanin-13 (204 aa).

At 1–19 (MVCGGFSCSKNCLCALNLL) the chain is on the cytoplasmic side. A helical membrane pass occupies residues 20–40 (YTLVSLLLIGIAAWGIGFGLI). At 41–44 (SSLR) the chain is on the extracellular side. Residues 45 to 65 (VVGVVIAVGIFLFLIALVGLI) traverse the membrane as a helical segment. The Cytoplasmic portion of the chain corresponds to 66 to 72 (GAVKHHQ). Residues 73-93 (VLLFFYMIILLLVFIVQFSVS) form a helical membrane-spanning segment. Residues 94 to 167 (CACLALNREQ…IGEYAGEVLR (74 aa)) lie on the Extracellular side of the membrane. 2 N-linked (GlcNAc...) asparagine glycosylation sites follow: asparagine 113 and asparagine 137. Serine 143 is subject to Phosphoserine. The chain crosses the membrane as a helical span at residues 168-188 (FVGGIGLFFSFTEILGVWLTY). Over 189–204 (RYRNQKDPRANPSAFL) the chain is Cytoplasmic.

This sequence belongs to the tetraspanin (TM4SF) family.

The protein resides in the membrane. In Rattus norvegicus (Rat), this protein is Tetraspanin-13 (Tspan13).